Here is a 131-residue protein sequence, read N- to C-terminus: Small ribosomal subunit protein uS11 (131 aa).

The protein belongs to the universal ribosomal protein uS11 family. As to quaternary structure, part of the 30S ribosomal subunit. Interacts with proteins S7 and S18. Binds to IF-3.

Functionally, located on the platform of the 30S subunit, it bridges several disparate RNA helices of the 16S rRNA. Forms part of the Shine-Dalgarno cleft in the 70S ribosome. This is Small ribosomal subunit protein uS11 from Geobacter sulfurreducens (strain ATCC 51573 / DSM 12127 / PCA).